Reading from the N-terminus, the 38-residue chain is Large ribosomal subunit protein bL36 (38 aa).

It belongs to the bacterial ribosomal protein bL36 family.

In Pelodictyon phaeoclathratiforme (strain DSM 5477 / BU-1), this protein is Large ribosomal subunit protein bL36.